Reading from the N-terminus, the 403-residue chain is Probable tRNA sulfurtransferase (403 aa).

The THUMP domain maps to 60 to 165 (QLAEERLKPI…KEGVFLSCRT (106 aa)). Residues 183 to 184 (ML), 208 to 209 (HF), arginine 265, glycine 287, and glutamine 296 contribute to the ATP site.

It belongs to the ThiI family.

Its subcellular location is the cytoplasm. It catalyses the reaction [ThiI sulfur-carrier protein]-S-sulfanyl-L-cysteine + a uridine in tRNA + 2 reduced [2Fe-2S]-[ferredoxin] + ATP + H(+) = [ThiI sulfur-carrier protein]-L-cysteine + a 4-thiouridine in tRNA + 2 oxidized [2Fe-2S]-[ferredoxin] + AMP + diphosphate. The catalysed reaction is [ThiS sulfur-carrier protein]-C-terminal Gly-Gly-AMP + S-sulfanyl-L-cysteinyl-[cysteine desulfurase] + AH2 = [ThiS sulfur-carrier protein]-C-terminal-Gly-aminoethanethioate + L-cysteinyl-[cysteine desulfurase] + A + AMP + 2 H(+). Its pathway is cofactor biosynthesis; thiamine diphosphate biosynthesis. Catalyzes the ATP-dependent transfer of a sulfur to tRNA to produce 4-thiouridine in position 8 of tRNAs, which functions as a near-UV photosensor. Also catalyzes the transfer of sulfur to the sulfur carrier protein ThiS, forming ThiS-thiocarboxylate. This is a step in the synthesis of thiazole, in the thiamine biosynthesis pathway. The sulfur is donated as persulfide by IscS. The sequence is that of Probable tRNA sulfurtransferase from Listeria monocytogenes serotype 4a (strain HCC23).